The following is a 259-amino-acid chain: tRNA-cytidine(32) 2-sulfurtransferase (259 aa).

Residues 37–42 carry the PP-loop motif motif; the sequence is SGGKDS. [4Fe-4S] cluster-binding residues include C112, C115, and C202.

It belongs to the TtcA family. In terms of assembly, homodimer. It depends on Mg(2+) as a cofactor. Requires [4Fe-4S] cluster as cofactor.

Its subcellular location is the cytoplasm. It carries out the reaction cytidine(32) in tRNA + S-sulfanyl-L-cysteinyl-[cysteine desulfurase] + AH2 + ATP = 2-thiocytidine(32) in tRNA + L-cysteinyl-[cysteine desulfurase] + A + AMP + diphosphate + H(+). It participates in tRNA modification. Catalyzes the ATP-dependent 2-thiolation of cytidine in position 32 of tRNA, to form 2-thiocytidine (s(2)C32). The sulfur atoms are provided by the cysteine/cysteine desulfurase (IscS) system. The protein is tRNA-cytidine(32) 2-sulfurtransferase of Syntrophotalea carbinolica (strain DSM 2380 / NBRC 103641 / GraBd1) (Pelobacter carbinolicus).